A 401-amino-acid chain; its full sequence is Argininosuccinate synthase (401 aa).

8–16 contacts ATP; that stretch reads AYSGGLDTS. L-citrulline is bound at residue Tyr85. Gly115 contributes to the ATP binding site. Positions 117, 121, and 122 each coordinate L-aspartate. Asn121 serves as a coordination point for L-citrulline. 4 residues coordinate L-citrulline: Arg125, Ser173, Glu258, and Tyr270.

This sequence belongs to the argininosuccinate synthase family. Type 1 subfamily. Homotetramer.

The protein resides in the cytoplasm. The catalysed reaction is L-citrulline + L-aspartate + ATP = 2-(N(omega)-L-arginino)succinate + AMP + diphosphate + H(+). The protein operates within amino-acid biosynthesis; L-arginine biosynthesis; L-arginine from L-ornithine and carbamoyl phosphate: step 2/3. The sequence is that of Argininosuccinate synthase from Staphylococcus aureus (strain MRSA252).